The following is a 186-amino-acid chain: NADH-dependent FMN reductase SfnE (186 aa).

The protein belongs to the SsuE family.

It carries out the reaction FMNH2 + NAD(+) = FMN + NADH + 2 H(+). Its function is as follows. Involved in the dimethyl sulfide degradation pathway. Catalyzes the NADH-dependent reduction of FMN. This Pseudomonas putida (Arthrobacter siderocapsulatus) protein is NADH-dependent FMN reductase SfnE.